A 153-amino-acid polypeptide reads, in one-letter code: CRIB domain-containing protein RIC4 (153 aa).

The CRIB domain occupies 99 to 112 (IGVPTNVKHVSHIG).

In terms of assembly, interacts with ARAC4/ROP2 and ARAC11/ROP1. Expressed in roots, leaves, stems, flowers, siliques and pollen.

The protein localises to the cell membrane. Functionally, functions as a downstream effector of Rho-related GTP binding proteins of the 'Rho of Plants' (ROPs) family. Participates in the propagation of ROP GTPase signals in specific cellular responses. Required for actin cortical microfilament assembly. Activated by ARAC4/ROP2 to promote the assembly of cortical actin microfilaments required for lobe formation and lateral expansion of pavement cells. Interaction with, and activation by ARAC4/ROP2 is inhibited by RIC1. Functions as a downstream effector of ARAC11/ROP1 to promote the assembly of apical F-actin associated with vesicle accumulation in the tip of the growing pollen tube. Counteracts the ARAC11/ROP1-RIC3 pathway, which activates calcium signaling that leads to apical F-actin disassembly associated with exocytosis, to control actin dynamics and pollen tube apical growth. Downstream of ARAC11/ROP1, is involved in the growth responses to the root-colonizing endophytic fungus P.indica. The sequence is that of CRIB domain-containing protein RIC4 (RIC4) from Arabidopsis thaliana (Mouse-ear cress).